The primary structure comprises 88 residues: Acylphosphatase (88 aa).

An Acylphosphatase-like domain is found at 3-88 (AARFIFTGVV…IPTTEAFVTG (86 aa)). Catalysis depends on residues R18 and N36.

It belongs to the acylphosphatase family.

The enzyme catalyses an acyl phosphate + H2O = a carboxylate + phosphate + H(+). This chain is Acylphosphatase (acyP), found in Xanthomonas campestris pv. campestris (strain 8004).